A 189-amino-acid polypeptide reads, in one-letter code: FUN14 domain-containing protein 2 (189 aa).

Residues 1–80 (METSAPRAGS…GQESGPSAEK (80 aa)) are Cytoplasmic-facing. A phosphoserine mark is found at S10 and S53. Residues 81–101 (YSVATQLFIGGVTGWCTGFIF) form a helical membrane-spanning segment. Residues 102–107 (QNVGKL) are Mitochondrial intermembrane-facing. Residues 108 to 128 (AATAVGGGFFLLQLANHTGYI) traverse the membrane as a helical segment. The Cytoplasmic portion of the chain corresponds to 129 to 164 (KVDWQRVEKDMKKAKEQLKIRKSNQMPTEVRSKAEE). Position 151 is a phosphoserine (S151). Residues 165-185 (VVSFVKKNVLVTGGFFGGFLL) form a helical membrane-spanning segment. Over 186 to 189 (GMAS) the chain is Mitochondrial intermembrane.

Belongs to the FUN14 family.

The protein localises to the mitochondrion outer membrane. It localises to the nucleus. In terms of biological role, binds directly and specifically 1,2-Diacyl-sn-glycero-3-phospho-(1'-myo-inositol-3',4',5'-bisphosphate) (PIP3) leading to the recruitment of PIP3 to mitochondria and may play a role in the regulation of the platelet activation via AKT/GSK3B/cGMP signaling pathways. May act as transcription factor that regulates SREBP1 (isoform SREBP-1C) expression in order to modulate triglyceride (TG) homeostasis in hepatocytes. This chain is FUN14 domain-containing protein 2, found in Macaca mulatta (Rhesus macaque).